The chain runs to 472 residues: MPRSRRTDEVSQYVSRLGSTRTAARLRFPGGFSGASRKPRRVAMLSVHTSPLHQPGTGDAGGMNVYIVELAKRLAAINIEVEIFTRATTGSLAPTVELAPGVLVRHVDAGPYEGLAKEELPAQLCAFTHGVMQAWAGQRPGYYDLVHSHYWLSGQVGWLAAQRWGVPLVHAMHTMAKVKNAALAEGDTPEPAARVIGETQIVNASDRLIANTAEEADELVRFYDADPAAVAVVHPGVNLDRFRPFPQGSDELRPGNAPSGRAAARARLGLPQDALIPLFAGRIQPLKAPDVLLRAVAVLLDRDPSLRSRIVVPVVGGPSGSGLAKPEGLQKLAARLGIADVVRFHPPVGQERLADWFRAASVLVMPSYSESFGLVAIEAQATGTPVVAAAVGGLPVAVRDGVGGFLVQGHEPEAYARALGRFADAPELVERMGAAAAAHAQSFGWDTAASATADVYTAALSDHRRRARAHHG.

His-48 provides a ligand contact to 1D-myo-inositol 3-phosphate. UDP-N-acetyl-alpha-D-glucosamine-binding positions include 54–55 (QP) and Gly-62. Residues 59 to 64 (DAGGMN), Lys-117, Tyr-150, Thr-174, and Arg-194 each bind 1D-myo-inositol 3-phosphate. UDP-N-acetyl-alpha-D-glucosamine-binding residues include Arg-282, Lys-287, and Val-348. Residues Phe-357, Arg-358, and Ala-360 each coordinate Mg(2+). UDP-N-acetyl-alpha-D-glucosamine is bound by residues Glu-370 and Glu-378. Mg(2+) is bound at residue Thr-384.

This sequence belongs to the glycosyltransferase group 1 family. MshA subfamily. In terms of assembly, homodimer.

The enzyme catalyses 1D-myo-inositol 3-phosphate + UDP-N-acetyl-alpha-D-glucosamine = 1D-myo-inositol 2-acetamido-2-deoxy-alpha-D-glucopyranoside 3-phosphate + UDP + H(+). Functionally, catalyzes the transfer of a N-acetyl-glucosamine moiety to 1D-myo-inositol 3-phosphate to produce 1D-myo-inositol 2-acetamido-2-deoxy-glucopyranoside 3-phosphate in the mycothiol biosynthesis pathway. The protein is D-inositol 3-phosphate glycosyltransferase of Streptomyces griseus subsp. griseus (strain JCM 4626 / CBS 651.72 / NBRC 13350 / KCC S-0626 / ISP 5235).